A 117-amino-acid chain; its full sequence is Immunoglobulin heavy variable 4-28 (117 aa).

An N-terminal signal peptide occupies residues 1–19 (MKHLWFFLLLVAAPRWVLS). Residues 20-44 (QVQLQESGPGLVKPSDTLSLTCAVS) form a framework-1 region. The 98-residue stretch at 20–117 (QVQLQESGPG…VDTAVYYCAR (98 aa)) folds into the Ig-like domain. A disulfide bond links Cys-41 and Cys-115. Positions 45 to 53 (GYSISSSNW) are complementarity-determining-1. A framework-2 region spans residues 54-70 (WGWIRQPPGKGLEWIGY). The segment at 71–77 (IYYSGST) is complementarity-determining-2. Residues 78–115 (YYNPSLKSRVTMSVDTSKNQFSLKLSSVTAVDTAVYYC) form a framework-3 region. Positions 116–117 (AR) are complementarity-determining-3.

In terms of assembly, immunoglobulins are composed of two identical heavy chains and two identical light chains; disulfide-linked.

Its subcellular location is the secreted. It is found in the cell membrane. In terms of biological role, v region of the variable domain of immunoglobulin heavy chains that participates in the antigen recognition. Immunoglobulins, also known as antibodies, are membrane-bound or secreted glycoproteins produced by B lymphocytes. In the recognition phase of humoral immunity, the membrane-bound immunoglobulins serve as receptors which, upon binding of a specific antigen, trigger the clonal expansion and differentiation of B lymphocytes into immunoglobulins-secreting plasma cells. Secreted immunoglobulins mediate the effector phase of humoral immunity, which results in the elimination of bound antigens. The antigen binding site is formed by the variable domain of one heavy chain, together with that of its associated light chain. Thus, each immunoglobulin has two antigen binding sites with remarkable affinity for a particular antigen. The variable domains are assembled by a process called V-(D)-J rearrangement and can then be subjected to somatic hypermutations which, after exposure to antigen and selection, allow affinity maturation for a particular antigen. The polypeptide is Immunoglobulin heavy variable 4-28 (Homo sapiens (Human)).